A 103-amino-acid polypeptide reads, in one-letter code: Transcriptional regulator WhiB7 (103 aa).

[4Fe-4S] cluster is bound by residues Cys-17, Cys-49, Cys-52, and Cys-58. The 4Fe-4S Wbl-type domain maps to 25-82 (PCHVGDPDLWFAENPGDLERAKALCAGCPIRVQCLTAALERQEPWGVWGGEILDRGSI). A disordered region spans residues 82–103 (IVARKRPRGRPRKDSGGNPAAA).

This sequence belongs to the WhiB family. Requires [4Fe-4S] cluster as cofactor. In terms of processing, the Fe-S cluster can be nitrosylated by nitric oxide (NO). Post-translationally, upon Fe-S cluster removal intramolecular disulfide bonds are formed.

Its subcellular location is the cytoplasm. Functionally, acts as a transcriptional regulator. Probably redox-responsive. The apo- but not holo-form probably binds DNA. Participates in maintaining a reduced cytoplasmic (MSH/MSSM) environment under normal growth conditions and directly or indirectly controls the concentration of mycothiol (MSH + MSSM). In Mycolicibacterium smegmatis (strain ATCC 700084 / mc(2)155) (Mycobacterium smegmatis), this protein is Transcriptional regulator WhiB7 (whiB7).